Reading from the N-terminus, the 94-residue chain is Co-chaperonin GroES (94 aa).

This sequence belongs to the GroES chaperonin family. In terms of assembly, heptamer of 7 subunits arranged in a ring. Interacts with the chaperonin GroEL.

It is found in the cytoplasm. Together with the chaperonin GroEL, plays an essential role in assisting protein folding. The GroEL-GroES system forms a nano-cage that allows encapsulation of the non-native substrate proteins and provides a physical environment optimized to promote and accelerate protein folding. GroES binds to the apical surface of the GroEL ring, thereby capping the opening of the GroEL channel. In Ehrlichia ruminantium (strain Gardel), this protein is Co-chaperonin GroES.